A 144-amino-acid polypeptide reads, in one-letter code: Large ribosomal subunit protein uL13 (144 aa).

This sequence belongs to the universal ribosomal protein uL13 family. As to quaternary structure, part of the 50S ribosomal subunit.

This protein is one of the early assembly proteins of the 50S ribosomal subunit, although it is not seen to bind rRNA by itself. It is important during the early stages of 50S assembly. This chain is Large ribosomal subunit protein uL13, found in Nitrosospira multiformis (strain ATCC 25196 / NCIMB 11849 / C 71).